The primary structure comprises 433 residues: 3-phosphoshikimate 1-carboxyvinyltransferase (433 aa).

3 residues coordinate 3-phosphoshikimate: lysine 20, serine 21, and arginine 25. Lysine 20 contributes to the phosphoenolpyruvate binding site. Residues glycine 92 and arginine 121 each coordinate phosphoenolpyruvate. 3-phosphoshikimate contacts are provided by serine 167, serine 168, glutamine 169, serine 195, aspartate 315, and lysine 342. Glutamine 169 serves as a coordination point for phosphoenolpyruvate. Aspartate 315 acts as the Proton acceptor in catalysis. The phosphoenolpyruvate site is built by arginine 346 and arginine 388.

This sequence belongs to the EPSP synthase family. Monomer.

The protein resides in the cytoplasm. The catalysed reaction is 3-phosphoshikimate + phosphoenolpyruvate = 5-O-(1-carboxyvinyl)-3-phosphoshikimate + phosphate. It functions in the pathway metabolic intermediate biosynthesis; chorismate biosynthesis. In terms of biological role, catalyzes the transfer of the enolpyruvyl moiety of phosphoenolpyruvate (PEP) to the 5-hydroxyl of shikimate-3-phosphate (S3P) to produce enolpyruvyl shikimate-3-phosphate and inorganic phosphate. The protein is 3-phosphoshikimate 1-carboxyvinyltransferase of Methanococcus aeolicus (strain ATCC BAA-1280 / DSM 17508 / OCM 812 / Nankai-3).